The primary structure comprises 236 residues: Proteasome subunit beta type-1 (236 aa).

Belongs to the peptidase T1B family. In terms of assembly, the 26S proteasome consists of a 20S proteasome core and two 19S regulatory subunits. The 20S proteasome core is composed of 28 subunits that are arranged in four stacked rings, resulting in a barrel-shaped structure. The two end rings are each formed by seven alpha subunits, and the two central rings are each formed by seven beta subunits. The catalytic chamber with the active sites is on the inside of the barrel.

The protein localises to the cytoplasm. Its subcellular location is the nucleus. Non-catalytic component of the proteasome, a multicatalytic proteinase complex which is characterized by its ability to cleave peptides with Arg, Phe, Tyr, Leu, and Glu adjacent to the leaving group at neutral or slightly basic pH. The proteasome has an ATP-dependent proteolytic activity. The polypeptide is Proteasome subunit beta type-1 (psmB1) (Dictyostelium discoideum (Social amoeba)).